Consider the following 298-residue polypeptide: Probable pyridoxal 5'-phosphate synthase subunit SNZ3 (298 aa).

Asp21 serves as a coordination point for D-ribose 5-phosphate. The active-site Schiff-base intermediate with D-ribose 5-phosphate is Lys78. D-ribose 5-phosphate-binding positions include Gly150, Gly213, and 234-235 (GS).

It belongs to the PdxS/SNZ family. In terms of assembly, homohexamer. Interacts with THI11.

The catalysed reaction is aldehydo-D-ribose 5-phosphate + D-glyceraldehyde 3-phosphate + L-glutamine = pyridoxal 5'-phosphate + L-glutamate + phosphate + 3 H2O + H(+). Its pathway is cofactor biosynthesis; pyridoxal 5'-phosphate biosynthesis. Functionally, catalyzes the formation of pyridoxal 5'-phosphate from ribose 5-phosphate (RBP), glyceraldehyde 3-phosphate (G3P) and ammonia. The ammonia is provided by a SNO isoform. Can also use ribulose 5-phosphate and dihydroxyacetone phosphate as substrates, resulting from enzyme-catalyzed isomerization of RBP and G3P, respectively. The protein is Probable pyridoxal 5'-phosphate synthase subunit SNZ3 (SNZ3) of Saccharomyces cerevisiae (strain ATCC 204508 / S288c) (Baker's yeast).